Reading from the N-terminus, the 2192-residue chain is Non-reducing polyketide synthase 1 (2192 aa).

The interval 5–243 (LLLGDQTADQ…VSIPIYAPYH (239 aa)) is N-terminal acylcarrier protein transacylase domain (SAT). A Ketosynthase family 3 (KS3) domain is found at 374 to 806 (NDKIAIVGMS…GGNTSLLLED (433 aa)). Active-site for beta-ketoacyl synthase activity residues include Cys546, His681, and His724. A malonyl-CoA:ACP transacylase (MAT) domain region spans residues 905-1218 (FCFTGQGSQY…ANSMCALFLA (314 aa)). Catalysis depends on Ser993, which acts as the For acyl/malonyl transferase activity. The tract at residues 1293–1610 (SCQKIIDEEF…RKVLNTFLPP (318 aa)) is product template (PT) domain. The segment at 1295-1430 (QKIIDEEFSA…CTVKFEDINT (136 aa)) is N-terminal hotdog fold. The 311-residue stretch at 1295–1605 (QKIIDEEFSA…FQKIPRKVLN (311 aa)) folds into the PKS/mFAS DH domain. His1327 serves as the catalytic Proton acceptor; for dehydratase activity. The interval 1458–1605 (AHVIGRGLAY…FQKIPRKVLN (148 aa)) is C-terminal hotdog fold. Asp1518 functions as the Proton donor; for dehydratase activity in the catalytic mechanism. Residues 1639–1668 (TQAQPAKAVPKQVTVAAPTPKAAPKKADLK) are disordered. The 78-residue stretch at 1670 to 1747 (PAGPTIITRV…EMKKFFSQYD (78 aa)) folds into the Carrier 1 domain. An O-(pantetheine 4'-phosphoryl)serine modification is found at Ser1707. Residues 1748–1788 (GEVGTPEQDDSDSDSETSGDASTPMSEVGTPMTIPSSAVSE) are disordered. The segment covering 1754 to 1764 (EQDDSDSDSET) has biased composition (acidic residues). Residues 1798–1875 (APASGEVSIA…DVENALDMRP (78 aa)) enclose the Carrier 2 domain. The residue at position 1835 (Ser1835) is an O-(pantetheine 4'-phosphoryl)serine. The thioesterase (TE) domain stretch occupies residues 1913-2164 (SKYPAATSVL…SMMKPPHVSI (252 aa)).

Functionally, non-reducing polyketide synthase; part of the gene cluster that mediates the biosynthesis of elsinochromes, pigments consisting of at least four interconvertible tautomers (A, B, C and D) that have a core phenolic quinone to which various side chains are attached and which play an important role in fungal pathogenesis. The non-reducing polyketide synthase PKS1 was proposed to iteratively catalyze decarboxylation between acetyl-CoA and malonyl-CoA subunits for polyketide chain elongation. The released polyketide undergoes cyclization to form an aromatic ring, and proceeds via serial modification steps to produce the heptaketide back- bone of elsinochrome. As elsinochrome has a symmetrical structure, two identical heptaketides are fused to form a core 1,2-dihydrobenzo-perylene ring structure, which can then be successively modified to produce the various derivatives of elsinochrome. Some of these reactions may be cooperatively carried out, at least in part, by the products of RDT1, OXR1 and PKS1. PRF1, embedded within the elsinochrome cluster possibly functions to stabilize some of the biosynthetic enzymes required for elsinochrome production. As prefoldin is a hexamer containing 2 a and 4 b subunits, additional prefoldin subunits, whose coding genes may not immediately link to the elsinochrome biosynthetic gene cluster, are required to fulfill the chaperone function. In addition, no methyltransferase-coding gene exists within the biosynthetic gene cluster, even though elsinochrome has four methyl groups at positions C3, C7, C8 and C12. Apparently, the identified gene cluster does not contain the entire entourage of genes responsible for elsinochrome biosynthesis. Once elsinochrome is synthesized, it must be exported outside the fungal cells, which is probably accomplished by the ECT1 transporter, to avoid toxicity. This Elsinoe fawcettii (Citrus scab fungus) protein is Non-reducing polyketide synthase 1.